Here is a 515-residue protein sequence, read N- to C-terminus: Recombining binding protein suppressor of hairless-like protein (515 aa).

The interval 1-40 (MDPRETTDPSLPPGPLTHLSLPDSSEVRLQSDGPSLLGSW) is disordered. 3 DNA-binding regions span residues 76-86 (QKSYGNEKRFF), 191-196 (SKPSQK), and 218-223 (RLRSQT). Residues 384-474 (PLISTLELSG…YPSPFSFTYT (91 aa)) form the IPT/TIG domain.

This sequence belongs to the Su(H) family. Interacts weakly with EBNA2. Does not interact with any Notch proteins. As to expression, highly expressed in lung. Also detected in spleen, and brain.

The protein resides in the nucleus. Putative transcription factor, which cooperates with EBNA2 to activate transcription. The protein is Recombining binding protein suppressor of hairless-like protein (Rbpjl) of Mus musculus (Mouse).